Here is a 149-residue protein sequence, read N- to C-terminus: Large ribosomal subunit protein bL9 (149 aa).

It belongs to the bacterial ribosomal protein bL9 family.

Its function is as follows. Binds to the 23S rRNA. This chain is Large ribosomal subunit protein bL9, found in Citrobacter koseri (strain ATCC BAA-895 / CDC 4225-83 / SGSC4696).